The following is a 209-amino-acid chain: Large ribosomal subunit protein eL13 (209 aa).

Belongs to the eukaryotic ribosomal protein eL13 family. Component of the 60S large ribosomal subunit (LSU).

It localises to the cytoplasm. In terms of biological role, component of the ribosome, a large ribonucleoprotein complex responsible for the synthesis of proteins in the cell. The small ribosomal subunit (SSU) binds messenger RNAs (mRNAs) and translates the encoded message by selecting cognate aminoacyl-transfer RNA (tRNA) molecules. The large subunit (LSU) contains the ribosomal catalytic site termed the peptidyl transferase center (PTC), which catalyzes the formation of peptide bonds, thereby polymerizing the amino acids delivered by tRNAs into a polypeptide chain. The nascent polypeptides leave the ribosome through a tunnel in the LSU and interact with protein factors that function in enzymatic processing, targeting, and the membrane insertion of nascent chains at the exit of the ribosomal tunnel. As part of the LSU, it is probably required for its formation and the maturation of rRNAs. The sequence is that of Large ribosomal subunit protein eL13 (rpl13) from Dictyostelium discoideum (Social amoeba).